The following is a 397-amino-acid chain: ORC1-type DNA replication protein 8 (397 aa).

Residues 61 to 65 (VGKTA), Tyr211, and Arg223 contribute to the ATP site.

The protein belongs to the CDC6/cdc18 family.

Involved in regulation of DNA replication. This chain is ORC1-type DNA replication protein 8 (orc8), found in Halobacterium salinarum (strain ATCC 700922 / JCM 11081 / NRC-1) (Halobacterium halobium).